Consider the following 140-residue polypeptide: 3-hydroxyacyl-[acyl-carrier-protein] dehydratase FabZ (140 aa).

Histidine 48 is an active-site residue.

It belongs to the thioester dehydratase family. FabZ subfamily.

The protein resides in the cytoplasm. It carries out the reaction a (3R)-hydroxyacyl-[ACP] = a (2E)-enoyl-[ACP] + H2O. In terms of biological role, involved in unsaturated fatty acids biosynthesis. Catalyzes the dehydration of short chain beta-hydroxyacyl-ACPs and long chain saturated and unsaturated beta-hydroxyacyl-ACPs. This is 3-hydroxyacyl-[acyl-carrier-protein] dehydratase FabZ from Latilactobacillus sakei subsp. sakei (strain 23K) (Lactobacillus sakei subsp. sakei).